Reading from the N-terminus, the 279-residue chain is Urease accessory protein UreD (279 aa).

The protein belongs to the UreD family. UreD, UreF and UreG form a complex that acts as a GTP-hydrolysis-dependent molecular chaperone, activating the urease apoprotein by helping to assemble the nickel containing metallocenter of UreC. The UreE protein probably delivers the nickel.

It localises to the cytoplasm. In terms of biological role, required for maturation of urease via the functional incorporation of the urease nickel metallocenter. The polypeptide is Urease accessory protein UreD (Pseudomonas fluorescens (strain ATCC BAA-477 / NRRL B-23932 / Pf-5)).